We begin with the raw amino-acid sequence, 3312 residues long: Cadherin EGF LAG seven-pass G-type receptor 3 (3312 aa).

Positions 1-32 (MMARRPPWRGLGGRSTPILLLLLLSLFPLSQE) are cleaved as a signal peptide. The Extracellular segment spans residues 33-2540 (ELGGGGHQGW…RLEGDLELLA (2508 aa)). Disordered stretches follow at residues 90-112 (GRRQSARNSRGPPEQPNEELGIE), 143-199 (GRTG…RKRV), and 212-306 (GSKG…EARK). The segment covering 159–173 (SSGVPGSGNSSPLPS) has biased composition (low complexity). Pro residues predominate over residues 290-299 (RPGPRPPGLP). 9 consecutive Cadherin domains span residues 326–433 (PQYN…SPVF), 434–545 (EQAQ…APQF), 546–651 (SEKR…IPIF), 652–756 (VSTP…RPEF), 757–858 (TMKE…RPVF), 859–961 (QSAH…APQF), 962–1067 (VASH…APVF), 1068–1169 (PAEE…SPVL), and 1170–1265 (NNFQ…RVVI). A glycan (N-linked (GlcNAc...) asparagine) is linked at N632. N847 carries an N-linked (GlcNAc...) asparagine glycan. 4 N-linked (GlcNAc...) asparagine glycosylation sites follow: N1182, N1222, N1317, and N1327. The 59-residue stretch at 1375–1433 (DDNVCLREPCENYMKCVSVLRFDSSAPFLASASTLFRPIQPIAGLRCRCPPGFTGDFCE) folds into the EGF-like 1; calcium-binding domain. Intrachain disulfides connect C1379/C1390, C1384/C1421, C1423/C1432, C1439/C1450, C1444/C1459, C1461/C1470, C1479/C1490, C1484/C1500, and C1502/C1513. In terms of domain architecture, EGF-like 2; calcium-binding spans 1435–1471 (ELDLCYSNPCRNGGACARREGGYTCVCRPRFTGEDCE). An EGF-like 3; calcium-binding domain is found at 1475–1514 (EAGRCVPGVCRNGGTCTDAPNGGFRCQCPAGGAFEGPRCE). One can recognise a Laminin G-like 1 domain in the interval 1515 to 1719 (VAARSFPPSS…VANNGTMAGC (205 aa)). N1649 and N1713 each carry an N-linked (GlcNAc...) asparagine glycan. Intrachain disulfides connect C1693–C1719, C1726–C1737, C1731–C1746, and C1748–C1757. In terms of domain architecture, EGF-like 4; calcium-binding spans 1722-1758 (KLHFCDSGPCKNSGFCSERWGSFSCDCPVGFGGKDCQ). Positions 1764–1944 (PHHFRGNGTL…SHRVNAEPGC (181 aa)) constitute a Laminin G-like 2 domain. N-linked (GlcNAc...) asparagine glycosylation is present at N1770. 9 disulfide bridges follow: C1915–C1944, C1950–C1961, C1955–C1970, C1972–C1981, C1985–C1996, C1990–C2008, C2010–C2019, C2027–C2040, and C2042–C2052. An EGF-like 5; calcium-binding domain is found at 1946 to 1982 (VTNACASGPCPPHADCRDLWQTFSCTCQPGYYGPGCV). The residue at position 1963 (D1963) is a (3R)-3-hydroxyaspartate. The EGF-like 6; calcium-binding domain occupies 1983-2020 (DACLLNPCQNQGSCRHLPGAPHGYTCDCVGGYFGHHCE). Residues 2021 to 2053 (HRMDQQCPRGWWGSPTCGPCNCDVHKGFDPNCN) form the EGF-like 7; calcium-binding domain. Residue N2053 is glycosylated (N-linked (GlcNAc...) asparagine). One can recognise an EGF-like 8; calcium-binding domain in the interval 2055-2090 (TNGQCHCKEFHYRPRGSDSCLPCDCYPVGSTSRSCA). Cystine bridges form between C2059/C2074, C2061/C2077, C2079/C2089, C2098/C2107, and C2110/C2122. Residues 2077–2124 (CDCYPVGSTSRSCAPHSGQCPCRPGALGRQCNSCDSPFAEVTASGCRV) form the Laminin EGF-like domain. The residue at position 2126 (Y2126) is a Phosphotyrosine. N2177, N2196, N2386, N2474, and N2506 each carry an N-linked (GlcNAc...) asparagine glycan. The disordered stretch occupies residues 2361–2399 (THVLLPSQSPRPSPSEVLPTSSSIENSTTSSVVPPPAPP). Residues 2368-2530 (QSPRPSPSEV…GVLMDASPRE (163 aa)) form the GAIN-B domain. Residues 2380–2391 (TSSSIENSTTSS) are compositionally biased toward low complexity. 2 disulfides stabilise this stretch: C2480–C2512 and C2500–C2514. A GPS region spans residues 2480–2530 (CVQWDPPGLAEQHGVWTARDCELVHRNGSHARCRCSRTGTFGVLMDASPRE). Residues 2541 to 2561 (VFTHVVVAVSVAALVLTAAIL) form a helical membrane-spanning segment. Topologically, residues 2562-2572 (LSLRSLKSNVR) are cytoplasmic. A helical transmembrane segment spans residues 2573–2593 (GIHANVAAALGVAELLFLLGI). The Extracellular portion of the chain corresponds to 2594 to 2601 (HRTHNQLV). The chain crosses the membrane as a helical span at residues 2602–2622 (CTAVAILLHYFFLSTFAWLFV). The Cytoplasmic portion of the chain corresponds to 2623-2643 (QGLHLYRMQVEPRNVDRGAMR). The chain crosses the membrane as a helical span at residues 2644–2664 (FYHALGWGVPAVLLGLAVGLD). The Extracellular portion of the chain corresponds to 2665 to 2681 (PEGYGNPDFCWISVHEP). The helical transmembrane segment at 2682 to 2702 (LIWSFAGPVVLVIVMNGTMFL) threads the bilayer. Topologically, residues 2703–2725 (LAARTSCSTGQREAKKTSALTLR) are cytoplasmic. A helical membrane pass occupies residues 2726–2746 (SSFLLLLLVSASWLFGLLAVN). The Extracellular segment spans residues 2747–2753 (HSILAFH). A helical transmembrane segment spans residues 2754 to 2774 (YLHAGLCGLQGLAVLLLFCVL). Over 2775–3312 (NADARAAWMP…SEVPRSEGHS (538 aa)) the chain is Cytoplasmic. Disordered regions lie at residues 2888–2927 (AGADSDSDSDLSLEEERSLSIPSSESEDNGRTRGRFQRPL) and 2978–3006 (TSKDAANNNQPDPALTSGDETSLGRAQRQ). A compositionally biased stretch (acidic residues) spans 2890 to 2900 (ADSDSDSDLSL). The residue at position 3051 (Y3051) is a Phosphotyrosine. Disordered regions lie at residues 3086-3243 (EEAP…TEQL) and 3256-3312 (SALS…EGHS). Phosphoserine is present on S3097. Composition is skewed to low complexity over residues 3175-3198 (SPQRQLSRDPLLPSRPLDSLSRSS), 3256-3265 (SALSSVQSSS), and 3272-3281 (TTATPSATAS). The span at 3287–3300 (TPRSATSHSISELS) shows a compositional bias: polar residues.

The protein belongs to the G-protein coupled receptor 2 family. LN-TM7 subfamily.

The protein localises to the cell membrane. Receptor that may have an important role in cell/cell signaling during nervous system formation. In Homo sapiens (Human), this protein is Cadherin EGF LAG seven-pass G-type receptor 3 (CELSR3).